The primary structure comprises 258 residues: Hydroxyethylthiazole kinase (258 aa).

A substrate-binding site is contributed by methionine 37. Arginine 112 and threonine 158 together coordinate ATP. Alanine 185 lines the substrate pocket.

It belongs to the Thz kinase family. It depends on Mg(2+) as a cofactor.

It carries out the reaction 5-(2-hydroxyethyl)-4-methylthiazole + ATP = 4-methyl-5-(2-phosphooxyethyl)-thiazole + ADP + H(+). It functions in the pathway cofactor biosynthesis; thiamine diphosphate biosynthesis; 4-methyl-5-(2-phosphoethyl)-thiazole from 5-(2-hydroxyethyl)-4-methylthiazole: step 1/1. Catalyzes the phosphorylation of the hydroxyl group of 4-methyl-5-beta-hydroxyethylthiazole (THZ). The sequence is that of Hydroxyethylthiazole kinase from Rhizobium etli (strain ATCC 51251 / DSM 11541 / JCM 21823 / NBRC 15573 / CFN 42).